A 375-amino-acid chain; its full sequence is Killer cell immunoglobulin-like receptor 2DL5B (375 aa).

The first 21 residues, 1-21 (MSLMVVSMACVGFFLLQGAWT), serve as a signal peptide directing secretion. Residues 22 to 238 (HEGGQDKPLL…PSSKTGIRRH (217 aa)) lie on the Extracellular side of the membrane. Ig-like C2-type domains lie at 42 to 102 (GGHV…HPRS) and 137 to 200 (GENV…LHDS). 2 disulfides stabilise this stretch: cysteine 49–cysteine 95 and cysteine 144–cysteine 193. Residues 213–233 (VSVTGNSSSSSSSPTEPSSKT) form a disordered region. Residue asparagine 218 is glycosylated (N-linked (GlcNAc...) asparagine). The segment covering 219–231 (SSSSSSSPTEPSS) has biased composition (low complexity). The chain crosses the membrane as a helical span at residues 239–259 (LHILIGTSVAIILFIILFFFL). Topologically, residues 260–375 (LHCCCSNKKN…ASSHVPAAGI (116 aa)) are cytoplasmic. Residues 334–375 (AKPRSLSPAHKHHSQALRGSSRETTALSQNRVASSHVPAAGI) are disordered. A compositionally biased stretch (polar residues) spans 355-366 (RETTALSQNRVA).

This sequence belongs to the immunoglobulin superfamily.

It localises to the cell membrane. Its function is as follows. Receptor on natural killer (NK) cells for HLA-C alleles. Inhibits the activity of NK cells thus preventing cell lysis. This chain is Killer cell immunoglobulin-like receptor 2DL5B (KIR2DL5B), found in Homo sapiens (Human).